The chain runs to 430 residues: Adenylosuccinate synthetase (430 aa).

Residues 12–18 (GDEGKGK) and 40–42 (GHT) contribute to the GTP site. D13 (proton acceptor) is an active-site residue. Mg(2+)-binding residues include D13 and G40. IMP is bound by residues 13–16 (DEGK), 38–41 (NAGH), T128, R142, Q223, T238, and R302. The active-site Proton donor is the H41. 298–304 (TTTGRPR) lines the substrate pocket. Residues R304, 330–332 (SID), and 412–414 (SVG) each bind GTP.

The protein belongs to the adenylosuccinate synthetase family. Homodimer. Mg(2+) serves as cofactor.

It is found in the cytoplasm. The catalysed reaction is IMP + L-aspartate + GTP = N(6)-(1,2-dicarboxyethyl)-AMP + GDP + phosphate + 2 H(+). Its pathway is purine metabolism; AMP biosynthesis via de novo pathway; AMP from IMP: step 1/2. Plays an important role in the de novo pathway of purine nucleotide biosynthesis. Catalyzes the first committed step in the biosynthesis of AMP from IMP. The protein is Adenylosuccinate synthetase of Streptococcus pyogenes serotype M3 (strain ATCC BAA-595 / MGAS315).